Consider the following 364-residue polypeptide: O-methyltransferase 1 (364 aa).

S-adenosyl-L-homocysteine-binding residues include Ser183, Gly207, Asp230, Asp250, and Lys264. Asp230 is an S-adenosyl-L-methionine binding site. His268 serves as the catalytic Proton acceptor.

Belongs to the class I-like SAM-binding methyltransferase superfamily. Cation-independent O-methyltransferase family. Homodimer.

The enzyme catalyses dopamine + S-adenosyl-L-methionine = 3-methoxytyramine + S-adenosyl-L-homocysteine + H(+). It catalyses the reaction 3,4-dihydroxy-5-methoxyphenethylamine + S-adenosyl-L-methionine = 4-hydroxy-3,5-dimethoxyphenethylamine + S-adenosyl-L-homocysteine + H(+). It participates in aromatic compound metabolism. The protein operates within alkaloid biosynthesis. In terms of biological role, O-methyltransferase participating in the biosynthesis of natural products derived from phenylethylamine, including mescaline, a natural hallucinogen potentially used in psychotherapeutic treatments. Catalyzes the O-methylation of mescaline meta hydroxyl groups, using dopamine and 3,4-dihydroxy-5-methoxyphenethylamine as substrates. This Lophophora williamsii (Peyote) protein is O-methyltransferase 1.